Here is a 312-residue protein sequence, read N- to C-terminus: Glyoxylate/hydroxypyruvate reductase A (312 aa).

Residue Arg-227 is part of the active site. Catalysis depends on His-275, which acts as the Proton donor.

The protein belongs to the D-isomer specific 2-hydroxyacid dehydrogenase family. GhrA subfamily.

The protein localises to the cytoplasm. The enzyme catalyses glycolate + NADP(+) = glyoxylate + NADPH + H(+). The catalysed reaction is (R)-glycerate + NAD(+) = 3-hydroxypyruvate + NADH + H(+). It carries out the reaction (R)-glycerate + NADP(+) = 3-hydroxypyruvate + NADPH + H(+). Its function is as follows. Catalyzes the NADPH-dependent reduction of glyoxylate and hydroxypyruvate into glycolate and glycerate, respectively. In Escherichia coli O157:H7, this protein is Glyoxylate/hydroxypyruvate reductase A.